Reading from the N-terminus, the 412-residue chain is Multifunctional CCA protein (412 aa).

Residues glycine 8 and arginine 11 each coordinate ATP. The CTP site is built by glycine 8 and arginine 11. 2 residues coordinate Mg(2+): glutamate 21 and aspartate 23. Positions 91, 137, and 140 each coordinate ATP. Positions 91, 137, and 140 each coordinate CTP. Residues 228-329 (CGIHTLMSLQ…WRLLQRLDVL (102 aa)) form the HD domain.

Belongs to the tRNA nucleotidyltransferase/poly(A) polymerase family. Bacterial CCA-adding enzyme type 1 subfamily. In terms of assembly, monomer. Can also form homodimers and oligomers. It depends on Mg(2+) as a cofactor. Ni(2+) is required as a cofactor.

The enzyme catalyses a tRNA precursor + 2 CTP + ATP = a tRNA with a 3' CCA end + 3 diphosphate. It catalyses the reaction a tRNA with a 3' CCA end + 2 CTP + ATP = a tRNA with a 3' CCACCA end + 3 diphosphate. In terms of biological role, catalyzes the addition and repair of the essential 3'-terminal CCA sequence in tRNAs without using a nucleic acid template. Adds these three nucleotides in the order of C, C, and A to the tRNA nucleotide-73, using CTP and ATP as substrates and producing inorganic pyrophosphate. tRNA 3'-terminal CCA addition is required both for tRNA processing and repair. Also involved in tRNA surveillance by mediating tandem CCA addition to generate a CCACCA at the 3' terminus of unstable tRNAs. While stable tRNAs receive only 3'-terminal CCA, unstable tRNAs are marked with CCACCA and rapidly degraded. The sequence is that of Multifunctional CCA protein from Acinetobacter baumannii (strain SDF).